The following is a 130-amino-acid chain: Large ribosomal subunit protein bL19 (130 aa).

This sequence belongs to the bacterial ribosomal protein bL19 family.

Functionally, this protein is located at the 30S-50S ribosomal subunit interface and may play a role in the structure and function of the aminoacyl-tRNA binding site. This Psychrobacter arcticus (strain DSM 17307 / VKM B-2377 / 273-4) protein is Large ribosomal subunit protein bL19.